Consider the following 288-residue polypeptide: UPF0761 membrane protein HS_0693 (288 aa).

The next 6 membrane-spanning stretches (helical) occupy residues 36–56, 92–112, 127–147, 176–196, 200–220, and 240–260; these read TLAL…FPVF, QMSA…IHSI, PAIF…IVIA, LLSL…YMVV, KVSI…FTLG, and AMAT…AVLL.

Belongs to the UPF0761 family.

The protein resides in the cell inner membrane. In Histophilus somni (strain 129Pt) (Haemophilus somnus), this protein is UPF0761 membrane protein HS_0693.